An 875-amino-acid polypeptide reads, in one-letter code: GATOR2 complex protein MIOS (875 aa).

7 WD repeats span residues 58-100 (SDTP…NSKF), 111-155 (KHAR…TPDI), 182-221 (GQND…QKMF), 223-261 (NTKA…KPVL), 265-306 (EQPK…TPIG), 320-360 (PCDN…SLAW), and 395-437 (RLRA…KQYT). A C4-type zinc finger spans residues 735–781 (VSCNFCGKSISYSCSSVPHQGRGFSQYGVSGSPTKSKVTSCPGCRKP). The Zn(2+) site is built by C737 and C740. Phosphoserine occurs at positions 759 and 766. The Zn(2+) site is built by C775, C778, C788, C827, C830, H832, H835, H838, C849, C854, and C858. Residues 782–863 (LPRCALCLIN…CTCKCMQLDT (82 aa)) form an RING-type; atypical zinc finger.

This sequence belongs to the WD repeat mio family. As to quaternary structure, component of the GATOR2 subcomplex, composed of MIOS, SEC13, SEH1L, WDR24 and WDR59. The GATOR2 complex interacts with CASTOR1 and CASTOR2; the interaction is negatively regulated by arginine. CASTOR1 and CASTOR2 convey leucine availability via direct interaction with MIOS. The GATOR2 complex interacts with SESN1, SESN2 and SESN3; the interaction is negatively regulated by amino acids. Interacts with SAR1A and SAR1B; the interaction is direct, disrupted by leucine and mediates the interaction of SAR1A or SAR1B with the GATOR2 complex to negatively regulate the TORC1 signaling upon leucine deprivation. Widely expressed. In brain, expressed in neurons and glia (oligodendrocytes and astrocytes), with more abundance in neurons.

Its subcellular location is the lysosome membrane. The GATOR2 complex is negatively regulated by the upstream amino acid sensors CASTOR1 and SESN2, which sequester the GATOR2 complex in absence of amino acids. In the presence of abundant amino acids, GATOR2 is released from CASTOR1 and SESN2 and activated. Its function is as follows. As a component of the GATOR2 complex, functions as an activator of the amino acid-sensing branch of the mTORC1 signaling pathway. The GATOR2 complex indirectly activates mTORC1 through the inhibition of the GATOR1 subcomplex. GATOR2 probably acts as an E3 ubiquitin-protein ligase toward GATOR1. In the presence of abundant amino acids, the GATOR2 complex mediates ubiquitination of the NPRL2 core component of the GATOR1 complex, leading to GATOR1 inactivation. In the absence of amino acids, GATOR2 is inhibited, activating the GATOR1 complex. Within the GATOR2 complex, MIOS is required to prevent autoubiquitination of WDR24, the catalytic subunit of the complex. The GATOR2 complex is required for brain myelination. This is GATOR2 complex protein MIOS from Mus musculus (Mouse).